Consider the following 317-residue polypeptide: Fe-S cluster assembly protein dre2 (317 aa).

Residues 22–152 (PVQAKRTLLL…KPNFEPSAAV (131 aa)) form an N-terminal SAM-like domain region. Residues 153–209 (PLKFGLKKKNKPTPTAVPSIPTGFAAPMGIDSPVTNHDRDEDDELINEDTLLSEEDL) are linker. Residues C219, C230, C233, and C235 each contribute to the [2Fe-2S] cluster site. A fe-S binding site A region spans residues 219–235 (CQPKTGRRRRACKDCTC). The [4Fe-4S] cluster site is built by C280, C283, C291, and C294. 2 consecutive short sequence motifs (cx2C motif) follow at residues 280 to 283 (CGSC) and 291 to 294 (CDGC). Residues 280-294 (CGSCALGDAFRCDGC) are fe-S binding site B.

This sequence belongs to the anamorsin family. In terms of assembly, monomer. Interacts with tah18. Interacts with mia40. It depends on [2Fe-2S] cluster as a cofactor. [4Fe-4S] cluster serves as cofactor.

It localises to the cytoplasm. It is found in the mitochondrion intermembrane space. Functionally, component of the cytosolic iron-sulfur (Fe-S) protein assembly (CIA) machinery required for the maturation of extramitochondrial Fe-S proteins. Part of an electron transfer chain functioning in an early step of cytosolic Fe-S biogenesis, facilitating the de novo assembly of a [4Fe-4S] cluster on the scaffold complex cfd1-nbp35. Electrons are transferred to dre2 from NADPH via the FAD- and FMN-containing protein tah18. Tah18-dre2 are also required for the assembly of the diferric tyrosyl radical cofactor of ribonucleotide reductase (RNR), probably by providing electrons for reduction during radical cofactor maturation in the catalytic small subunit rnr2. In Penicillium rubens (strain ATCC 28089 / DSM 1075 / NRRL 1951 / Wisconsin 54-1255) (Penicillium chrysogenum), this protein is Fe-S cluster assembly protein dre2.